We begin with the raw amino-acid sequence, 414 residues long: Ena/VASP-like protein (414 aa).

In terms of domain architecture, WH1 spans 1 to 112; it reads MSEQSICQAR…NAMLFALNIM (112 aa). The residue at position 130 (Ser-130) is a Phosphoserine. The tract at residues 157-369 is disordered; the sequence is ATGPILPPGH…SRVKPAGSVN (213 aa). Residues 179-204 are compositionally biased toward pro residues; sequence GPPPPPPPPVPPPPTGSTPPPPPPLP. Over residues 217–228 the composition is skewed to low complexity; the sequence is SASGLAAALAGA. The interval 220–240 is EVH2 block A; sequence GLAAALAGAKLRRVQRPEDAS. Positions 220-411 are EVH2; the sequence is GLAAALAGAK…DAIRQELSGI (192 aa). Positions 229–232 match the KLKR motif; it reads KLRR. A compositionally biased stretch (low complexity) spans 240-251; that stretch reads SGGSSPSGTSKS. A phosphoserine mark is found at Ser-244 and Ser-257. The EVH2 block B stretch occupies residues 263-280; sequence GGLMEEMNKLLAKRRKAA. The span at 297–318 shows a compositional bias: polar residues; sequence EDPSTSPSPGTRATSQPPNSSE. Residues Ser-302, Ser-304, Ser-327, Ser-329, Ser-339, Ser-347, Ser-352, and Ser-367 each carry the phosphoserine modification. Residues 319 to 329 show a composition bias toward basic and acidic residues; it reads AGRKPWERSNS. The tract at residues 340-360 is required for interaction with ZDHHC17; the sequence is RTPSVAKSPEAKSPLQSQPHS. The EVH2 block C stretch occupies residues 377-411; it reads DLDRMKQEILEEVVRELHKVKEEIIDAIRQELSGI.

The protein belongs to the Ena/VASP family. In terms of assembly, homotetramer. Binds to the SH3 domains of ABL1, LYN and SRC. Also binds to profilin, with preference for isoform IIa of PFN2, and the WW domain of APBB1/FE65. Binds to SEMA6A. Interacts, via the Pro-rich region, with the C-terminal SH3 domain of DNMBP. Interacts with RAPH1. Binds, via the EVH1 domain, the Pro-rich domain of Listeria monocytogenes actA. Binds, via the EVH1 domain, the Pro-rich domain of ZYX. Interacts with FYB1. Interacts with ZDHHC17. Phosphorylated by PKA; phosphorylation abolishes binding to SH3 domains of ABL and SRC. As to expression, highest expression in thymus and spleen (at protein level). Low levels in placenta, ovary, testis, fat and lung (at protein level). Isoform 1 and isoform 2 are expressed in cortical neurons and glial cells.

The protein localises to the cytoplasm. The protein resides in the cytoskeleton. Its subcellular location is the stress fiber. It localises to the cell projection. It is found in the lamellipodium. Its function is as follows. Ena/VASP proteins are actin-associated proteins involved in a range of processes dependent on cytoskeleton remodeling and cell polarity such as axon guidance and lamellipodial and filopodial dynamics in migrating cells. EVL enhances actin nucleation and polymerization. This Mus musculus (Mouse) protein is Ena/VASP-like protein (Evl).